The chain runs to 481 residues: Probable autolysin LytO (481 aa).

The region spanning Lys-7–Arg-148 is the Peptidase C51 domain. The span at Thr-155–Gln-165 shows a compositional bias: polar residues. The tract at residues Thr-155–Lys-177 is disordered. The region spanning Ser-198–His-323 is the N-acetylmuramoyl-L-alanine amidase domain. The SH3b domain occupies Glu-398–Ser-466.

This sequence belongs to the N-acetylmuramoyl-L-alanine amidase 2 family.

The catalysed reaction is Hydrolyzes the link between N-acetylmuramoyl residues and L-amino acid residues in certain cell-wall glycopeptides.. Has weak lytic activity toward S.aureus cells. The polypeptide is Probable autolysin LytO (Staphylococcus aureus (strain NCTC 8325 / PS 47)).